An 81-amino-acid chain; its full sequence is Putative defensin-like protein 31 (81 aa).

Residues 1–26 (MTSSSKCLFFVFLCLAALLTPYLAEA) form the signal peptide. Disulfide bonds link Cys-38–Cys-58, Cys-44–Cys-70, and Cys-48–Cys-72.

The protein belongs to the DEFL family.

Its subcellular location is the secreted. The protein is Putative defensin-like protein 31 of Arabidopsis thaliana (Mouse-ear cress).